Here is a 140-residue protein sequence, read N- to C-terminus: Blasticidin-S deaminase (140 aa).

The CMP/dCMP-type deaminase domain occupies 8 to 140; sequence QQDLELVEVA…ELIPLKYTRN (133 aa). Residue Cys59 participates in Zn(2+) binding. Glu61 (proton donor) is an active-site residue. Zn(2+)-binding residues include Cys100 and Cys103.

The protein belongs to the cytidine and deoxycytidylate deaminase family. It depends on Zn(2+) as a cofactor.

It carries out the reaction blasticidin S + H2O + H(+) = deaminohydroxyblasticidin S + NH4(+). Catalyzes the deamination of the cytosine moiety of the antibiotics blasticidin S, cytomycin and acetylblasticidin S. This is Blasticidin-S deaminase (bsr) from Bacillus cereus.